The sequence spans 453 residues: Probable phenylalanine--tRNA ligase, mitochondrial (453 aa).

A mitochondrion-targeting transit peptide spans 1–27 (MLLTLRVQGARHWLKSTRCLASSAAPA). Substrate-binding positions include 142-145 (TAHQ), arginine 164, 171-173 (THY), 178-180 (QAD), glutamate 285, and phenylalanine 310. One can recognise an FDX-ACB domain in the interval 356-453 (SHYPQCTNDL…SVDSFNVQIR (98 aa)).

It belongs to the class-II aminoacyl-tRNA synthetase family.

It localises to the mitochondrion matrix. The catalysed reaction is tRNA(Phe) + L-phenylalanine + ATP = L-phenylalanyl-tRNA(Phe) + AMP + diphosphate + H(+). Functionally, is responsible for the charging of tRNA(Phe) with phenylalanine in mitochondrial translation. The protein is Probable phenylalanine--tRNA ligase, mitochondrial of Drosophila melanogaster (Fruit fly).